The primary structure comprises 268 residues: Shikimate dehydrogenase (NADP(+)) (268 aa).

Shikimate-binding positions include 13 to 15 (SLS) and T60. K64 functions as the Proton acceptor in the catalytic mechanism. E76 is an NADP(+) binding site. Shikimate-binding residues include N85 and D100. NADP(+)-binding positions include 124–128 (GAGGA), 148–153 (NRTMAR), and I209. Y211 serves as a coordination point for shikimate. Residue G232 participates in NADP(+) binding.

The protein belongs to the shikimate dehydrogenase family. Homodimer.

It carries out the reaction shikimate + NADP(+) = 3-dehydroshikimate + NADPH + H(+). The protein operates within metabolic intermediate biosynthesis; chorismate biosynthesis; chorismate from D-erythrose 4-phosphate and phosphoenolpyruvate: step 4/7. Its function is as follows. Involved in the biosynthesis of the chorismate, which leads to the biosynthesis of aromatic amino acids. Catalyzes the reversible NADPH linked reduction of 3-dehydroshikimate (DHSA) to yield shikimate (SA). This Staphylococcus aureus (strain bovine RF122 / ET3-1) protein is Shikimate dehydrogenase (NADP(+)).